Here is a 103-residue protein sequence, read N- to C-terminus: MSKFENVSVAKKANVYFDGACVSHSIEFPDGTAKSVGVILPATLTFGTTAPEVMELVEGHCRVTLPGADAPVTFRGGESFEVPADSEFTIEVLETVHYVCHYG.

Belongs to the nucleoside phosphorylase PpnP family.

It catalyses the reaction a purine D-ribonucleoside + phosphate = a purine nucleobase + alpha-D-ribose 1-phosphate. The enzyme catalyses adenosine + phosphate = alpha-D-ribose 1-phosphate + adenine. The catalysed reaction is cytidine + phosphate = cytosine + alpha-D-ribose 1-phosphate. It carries out the reaction guanosine + phosphate = alpha-D-ribose 1-phosphate + guanine. It catalyses the reaction inosine + phosphate = alpha-D-ribose 1-phosphate + hypoxanthine. The enzyme catalyses thymidine + phosphate = 2-deoxy-alpha-D-ribose 1-phosphate + thymine. The catalysed reaction is uridine + phosphate = alpha-D-ribose 1-phosphate + uracil. It carries out the reaction xanthosine + phosphate = alpha-D-ribose 1-phosphate + xanthine. Functionally, catalyzes the phosphorolysis of diverse nucleosides, yielding D-ribose 1-phosphate and the respective free bases. Can use uridine, adenosine, guanosine, cytidine, thymidine, inosine and xanthosine as substrates. Also catalyzes the reverse reactions. The protein is Pyrimidine/purine nucleoside phosphorylase of Nocardia farcinica (strain IFM 10152).